Here is a 175-residue protein sequence, read N- to C-terminus: Glycine-rich RNA-binding protein 1 (175 aa).

An RRM domain is found at 3–81 (AKVYVGNLSW…RRIRVNMANS (79 aa)). Residues 114 to 175 (GQPGGFQQPG…GYGGYNGQSQ (62 aa)) form a disordered region. Residues 122–131 (PGGFQQQGGY) are compositionally biased toward low complexity. Positions 132 to 141 (PQQGGYGGYQ) are enriched in gly residues. Residues 142–162 (QPGFQPQQGGYGAPQQGYGAP) show a composition bias toward low complexity. Over residues 163 to 175 (QQGGYGGYNGQSQ) the composition is skewed to gly residues.

It belongs to the glycine-rich RNA-binding protein family. Part of large ribonucleoprotein complexes (mRNPs) containing RNA-binding proteins RRM4 and PAB1, endosome-binding protein UPA1, core scaffold protein UPA2 and associated factor GRP1.

The protein localises to the endosome. In terms of biological role, component of endosomal mRNA transport that regulates polarity of the infectious hyphae by transporting a broad spectrum of cargo mRNAs from the nucleus to cell poles. The sequence is that of Glycine-rich RNA-binding protein 1 from Mycosarcoma maydis (Corn smut fungus).